Here is a 27-residue protein sequence, read N- to C-terminus: Endoglucanase gh5 (27 aa).

Glu-6 acts as the Nucleophile in catalysis.

The catalysed reaction is Endohydrolysis of (1-&gt;4)-beta-D-glucosidic linkages in cellulose, lichenin and cereal beta-D-glucans.. Its activity is regulated as follows. Activity is stimulated by zinc ions, potassium ions and DTT. Activity is inhibited by manganese and chloride ions. In terms of biological role, endoglucanase (EG) that cleaves the internal beta-1,4-glucosidic bonds in cellulose. This chain is Endoglucanase gh5, found in Fomes meliae (Fomitopsis meliae).